The following is a 37-amino-acid chain: Esculentin-2A (37 aa).

An intrachain disulfide couples C31 to C37.

Belongs to the frog skin active peptide (FSAP) family. Esculentin subfamily. Expressed by the skin glands.

It localises to the secreted. Shows antibacterial activity against representative Gram-negative and Gram-positive bacterial species, and hemolytic activity. The protein is Esculentin-2A of Pelophylax lessonae (Pool frog).